A 152-amino-acid polypeptide reads, in one-letter code: Sorting nexin-3 (152 aa).

The PX domain maps to 30–147 (NFLEIEVRSP…CAFIQDPQWD (118 aa)). 5 residues coordinate a 1,2-diacyl-sn-glycero-3-phospho-(1D-myo-inositol-3-phosphate): Arg-73, Ser-75, Lys-99, Arg-104, and Arg-113.

Belongs to the sorting nexin family.

It is found in the cytoplasm. Its subcellular location is the golgi apparatus membrane. The protein localises to the prevacuolar compartment membrane. Its function is as follows. Required for retention of late Golgi membrane proteins. Component of the retrieval machinery that functions by direct interaction with the cytosolic tails of certain TGN membrane proteins during the sorting/budding process at the prevacuolar compartment. Binds phosphatidylinositol 3-phosphate (PtdIns(P3)). The polypeptide is Sorting nexin-3 (SNX3) (Yarrowia lipolytica (strain CLIB 122 / E 150) (Yeast)).